The sequence spans 288 residues: Cell division protein ZipA (288 aa).

Met1 is a topological domain (periplasmic). The helical transmembrane segment at 2-22 threads the bilayer; sequence EIGLREWLIVIGIIVIAGILF. At 23–288 the chain is on the cytoplasmic side; sequence DGWRRMRGGK…ERRALTQRRG (266 aa). Positions 48 to 138 are disordered; the sequence is DEEETTSAEV…DDKPAQRITE (91 aa). Composition is skewed to basic and acidic residues over residues 64 to 77, 85 to 105, and 122 to 138; these read LDTHKEPQLDEHDL, RDNKRGAGSEKRGDKKRKDEP, and ARDDDFPDDKPAQRITE.

This sequence belongs to the ZipA family. Interacts with FtsZ via their C-terminal domains.

The protein localises to the cell inner membrane. In terms of biological role, essential cell division protein that stabilizes the FtsZ protofilaments by cross-linking them and that serves as a cytoplasmic membrane anchor for the Z ring. Also required for the recruitment to the septal ring of downstream cell division proteins. This chain is Cell division protein ZipA, found in Pseudomonas syringae pv. tomato (strain ATCC BAA-871 / DC3000).